A 218-amino-acid polypeptide reads, in one-letter code: Probable GTP-binding protein EngB (218 aa).

In terms of domain architecture, EngB-type G spans 44–218 (DRIEVCFAGR…LRATIATIET (175 aa)). Residues 52 to 59 (GRSNVGKS), 79 to 83 (GRTQE), 97 to 100 (DLPG), 164 to 167 (TKSD), and 198 to 200 (TSS) each bind GTP. Residues serine 59 and threonine 81 each contribute to the Mg(2+) site.

It belongs to the TRAFAC class TrmE-Era-EngA-EngB-Septin-like GTPase superfamily. EngB GTPase family. Mg(2+) serves as cofactor.

Its function is as follows. Necessary for normal cell division and for the maintenance of normal septation. This is Probable GTP-binding protein EngB from Jannaschia sp. (strain CCS1).